The sequence spans 238 residues: Sugar fermentation stimulation protein homolog (238 aa).

Belongs to the SfsA family.

This is Sugar fermentation stimulation protein homolog from Pseudoalteromonas translucida (strain TAC 125).